The sequence spans 286 residues: Formamidopyrimidine-DNA glycosylase (286 aa).

Residue proline 2 is the Schiff-base intermediate with DNA of the active site. Glutamate 3 acts as the Proton donor in catalysis. The active-site Proton donor; for beta-elimination activity is lysine 60. DNA-binding residues include histidine 103, arginine 122, and arginine 167. Residues 252 to 286 form an FPG-type zinc finger; sequence WVYRRNQKPCRKCGTLIEKTKVAGRSTHWCPNCQN. Arginine 276 serves as the catalytic Proton donor; for delta-elimination activity.

The protein belongs to the FPG family. In terms of assembly, monomer. It depends on Zn(2+) as a cofactor.

It catalyses the reaction Hydrolysis of DNA containing ring-opened 7-methylguanine residues, releasing 2,6-diamino-4-hydroxy-5-(N-methyl)formamidopyrimidine.. The catalysed reaction is 2'-deoxyribonucleotide-(2'-deoxyribose 5'-phosphate)-2'-deoxyribonucleotide-DNA = a 3'-end 2'-deoxyribonucleotide-(2,3-dehydro-2,3-deoxyribose 5'-phosphate)-DNA + a 5'-end 5'-phospho-2'-deoxyribonucleoside-DNA + H(+). Its function is as follows. Involved in base excision repair of DNA damaged by oxidation or by mutagenic agents. Acts as a DNA glycosylase that recognizes and removes damaged bases. Has a preference for oxidized purines, such as 7,8-dihydro-8-oxoguanine (8-oxoG). Has AP (apurinic/apyrimidinic) lyase activity and introduces nicks in the DNA strand. Cleaves the DNA backbone by beta-delta elimination to generate a single-strand break at the site of the removed base with both 3'- and 5'-phosphates. This Prochlorococcus marinus (strain MIT 9211) protein is Formamidopyrimidine-DNA glycosylase.